A 716-amino-acid chain; its full sequence is Astellifadiene synthase (716 aa).

The terpene cyclase stretch occupies residues 1-323 (MEFKYSTLID…SPRYYTDAKF (323 aa)). Position 92 (aspartate 92) interacts with Mg(2+). Substrate-binding positions include aspartate 92, 179–182 (RIYD), asparagine 223, 227–231 (SWEKE), and 316–317 (RY). A DDXXD 1 motif is present at residues 92–96 (DDVID). An NSE/DTE motif is present at residues 223–231 (NDLVSWEKE). Residues 324 to 713 (SQRQLDWIKN…FQLKLILQFL (390 aa)) are prenyltransferase. Isopentenyl diphosphate is bound by residues lysine 436, arginine 439, and histidine 468. Mg(2+)-binding residues include aspartate 475 and aspartate 479. Positions 475-479 (DDVED) match the DDXXD 2 motif. Arginine 484 lines the dimethylallyl diphosphate pocket. Arginine 485 is a binding site for isopentenyl diphosphate. Lysine 562, threonine 563, glutamine 598, asparagine 605, lysine 615, and lysine 625 together coordinate dimethylallyl diphosphate.

It in the N-terminal section; belongs to the terpene synthase family. In the C-terminal section; belongs to the FPP/GGPP synthase family. Hexamer. The cofactor is Mg(2+).

The enzyme catalyses isopentenyl diphosphate + (2E,6E)-farnesyl diphosphate = (2E,6E,10E)-geranylgeranyl diphosphate + diphosphate. It catalyses the reaction isopentenyl diphosphate + (2E,6E,10E)-geranylgeranyl diphosphate = (2E,6E,10E,14E)-geranylfarnesyl diphosphate + diphosphate. The catalysed reaction is (2E,6E,10E,14E)-geranylfarnesyl diphosphate = astellifadiene + diphosphate. It participates in secondary metabolite biosynthesis; terpenoid biosynthesis. Functionally, bifunctional terpene synthase that converts dimethylallyl diphosphate (DMAPP) and isopentenyl diphosphate (IPP) into astellifadiene. The C-terminal prenyltransferase (PT) domain of EvAS catalyzes formation of geranylfarnesyl pyrophosphate (GFPP), whereas the N-terminal terpene cyclase (TC) domain catalyzes the cyclization of GFPP to astellifadiene. In Emericella variicolor (Aspergillus stellatus), this protein is Astellifadiene synthase.